We begin with the raw amino-acid sequence, 127 residues long: Glycine cleavage system H protein (127 aa).

Positions 24-105 (AALVGITDFA…YGEGWLVKIR (82 aa)) constitute a Lipoyl-binding domain. K65 bears the N6-lipoyllysine mark.

This sequence belongs to the GcvH family. The glycine cleavage system is composed of four proteins: P, T, L and H. The cofactor is (R)-lipoate.

The glycine cleavage system catalyzes the degradation of glycine. The H protein shuttles the methylamine group of glycine from the P protein to the T protein. The polypeptide is Glycine cleavage system H protein (Chlorobium limicola (strain DSM 245 / NBRC 103803 / 6330)).